The chain runs to 77 residues: Exodeoxyribonuclease 7 small subunit (77 aa).

The protein belongs to the XseB family. As to quaternary structure, heterooligomer composed of large and small subunits.

The protein localises to the cytoplasm. The catalysed reaction is Exonucleolytic cleavage in either 5'- to 3'- or 3'- to 5'-direction to yield nucleoside 5'-phosphates.. Bidirectionally degrades single-stranded DNA into large acid-insoluble oligonucleotides, which are then degraded further into small acid-soluble oligonucleotides. In Clostridium acetobutylicum (strain ATCC 824 / DSM 792 / JCM 1419 / IAM 19013 / LMG 5710 / NBRC 13948 / NRRL B-527 / VKM B-1787 / 2291 / W), this protein is Exodeoxyribonuclease 7 small subunit.